The primary structure comprises 71 residues: Small ribosomal subunit protein bS21 (71 aa).

Positions 48 to 59 (EKASLAKRHAKR) are enriched in basic residues. A disordered region spans residues 48-71 (EKASLAKRHAKRNARENARNTRLY). The span at 60 to 71 (NARENARNTRLY) shows a compositional bias: basic and acidic residues.

Belongs to the bacterial ribosomal protein bS21 family.

The chain is Small ribosomal subunit protein bS21 from Actinobacillus pleuropneumoniae serotype 5b (strain L20).